A 126-amino-acid polypeptide reads, in one-letter code: Large ribosomal subunit protein bL17 (126 aa).

Belongs to the bacterial ribosomal protein bL17 family. In terms of assembly, part of the 50S ribosomal subunit. Contacts protein L32.

In Coxiella burnetii (strain CbuK_Q154) (Coxiella burnetii (strain Q154)), this protein is Large ribosomal subunit protein bL17.